The sequence spans 660 residues: T-box protein H15 (660 aa).

The span at 1–11 (MLLSNQPANTK) shows a compositional bias: polar residues. Disordered stretches follow at residues 1-72 (MLLS…NHNQ), 90-122 (GGNA…DDVD), and 169-266 (QQQQ…PKIV). Low complexity predominate over residues 12-22 (PQQTPSPSQTQ). Polar residues predominate over residues 23–33 (NFKSKLQQQIV). Over residues 35–47 (AAAAAAANIANGS) the composition is skewed to low complexity. Positions 48-71 (SHHHHHQNHHHHHPLNNHHNHNHN) are enriched in basic residues. Composition is skewed to low complexity over residues 93 to 108 (APSS…SPAS) and 169 to 179 (QQQQQQQQQRQ). Residues 180–198 (QTHHHATTGKQQRQHHNHH) are compositionally biased toward basic residues. Residues 199 to 233 (SSNTNNSSNSGNSNTNSKSSSQRGRSAAAVGAAAT) are compositionally biased toward low complexity. The segment covering 234–243 (PSPPPPPPSQ) has biased composition (pro residues). Residues 286-472 (LWDKFHELGT…SNPFAKGFRD (187 aa)) constitute a DNA-binding region (T-box). The interval 598-660 (NRTPPPSMAV…PPASNRAESP (63 aa)) is disordered. Over residues 600–613 (TPPPSMAVAPPAPA) the composition is skewed to pro residues. Over residues 614–624 (TPTSSCGSASP) the composition is skewed to low complexity. Over residues 643-660 (QVPQHQASPPASNRAESP) the composition is skewed to polar residues.

The protein localises to the nucleus. This chain is T-box protein H15 (H15), found in Drosophila melanogaster (Fruit fly).